A 274-amino-acid chain; its full sequence is Ommochrome-binding protein (274 aa).

Residues 1–18 form the signal peptide; sequence MKLLILTICALHVNQMMA. Asn-183 carries N-linked (GlcNAc...) asparagine glycosylation.

In terms of assembly, monomer. Present in larval hemolymph and synthesized by the fat body.

Binds to an ommochrome, ommatin D which is a yellow chromophore. May be involved in guiding the chromophore through the hemolymph from the epidermis to the gut. This is Ommochrome-binding protein from Manduca sexta (Tobacco hawkmoth).